The following is a 108-amino-acid chain: Ig kappa chain V-V region HP R16.7 (108 aa).

Positions 1–23 (DIQMTQTTSSLSASLGDRVTISC) are framework-1. C23 and C88 are disulfide-bonded. The interval 24–34 (RASQDISNYLN) is complementarity-determining-1. The tract at residues 35–49 (WYQQKPDGTVKLLIY) is framework-2. Positions 50–56 (YTSRLHS) are complementarity-determining-2. A framework-3 region spans residues 57–88 (GVPSRFSGSGSGTDYSLTISNLEQEDIATYFC). The tract at residues 89-97 (QQGNSLPRT) is complementarity-determining-3. Residues 98 to 108 (FGGGTKLEIKR) are framework-4.

This is Ig kappa chain V-V region HP R16.7 from Mus musculus (Mouse).